Consider the following 158-residue polypeptide: UPF0725 protein At3g57210 (158 aa).

Belongs to the UPF0725 (EMB2204) family.

The chain is UPF0725 protein At3g57210 from Arabidopsis thaliana (Mouse-ear cress).